We begin with the raw amino-acid sequence, 721 residues long: Centlein (721 aa).

Positions 52–164 (KNEKAISEQT…LRDENEEVVN (113 aa)) form a coiled coil. Disordered regions lie at residues 156–180 (RDEN…KSEM) and 259–288 (ETSQ…QQEV). 2 stretches are compositionally biased toward basic and acidic residues: residues 165-178 (PEEK…KAKS) and 267-284 (IEND…DSRA). Coiled coils occupy residues 345–515 (LLRE…EDLK) and 573–626 (QSEQ…TQKS). Position 658 is a phosphothreonine (Thr658).

As to quaternary structure, interacts with CEP250 and CEP68. Interacts with NEK2; the interaction leads to phosphorylation of CNTLN. Phosphorylated directly or indirectly by NEK2.

The protein localises to the cytoplasm. It localises to the cytoskeleton. It is found in the microtubule organizing center. Its subcellular location is the centrosome. The protein resides in the centriole. Required for centrosome cohesion and recruitment of CEP68 to centrosomes. In Rattus norvegicus (Rat), this protein is Centlein.